The sequence spans 324 residues: Beta-ketoacyl-[acyl-carrier-protein] synthase III (324 aa).

Active-site residues include Cys-112 and His-249. The ACP-binding stretch occupies residues 250–254 (QANRR). Residue Asn-279 is part of the active site.

This sequence belongs to the thiolase-like superfamily. FabH family. Homodimer.

It localises to the cytoplasm. It carries out the reaction malonyl-[ACP] + acetyl-CoA + H(+) = 3-oxobutanoyl-[ACP] + CO2 + CoA. It functions in the pathway lipid metabolism; fatty acid biosynthesis. In terms of biological role, catalyzes the condensation reaction of fatty acid synthesis by the addition to an acyl acceptor of two carbons from malonyl-ACP. Catalyzes the first condensation reaction which initiates fatty acid synthesis and may therefore play a role in governing the total rate of fatty acid production. Possesses both acetoacetyl-ACP synthase and acetyl transacylase activities. Its substrate specificity determines the biosynthesis of branched-chain and/or straight-chain of fatty acids. The chain is Beta-ketoacyl-[acyl-carrier-protein] synthase III from Streptococcus equi subsp. zooepidemicus (strain H70).